The primary structure comprises 258 residues: Acetylglutamate kinase (258 aa).

Substrate-binding positions include 44–45 (GG), arginine 66, and asparagine 158. Residues 181 to 186 (DVSGIL) and 209 to 211 (IIT) contribute to the ATP site.

This sequence belongs to the acetylglutamate kinase family. ArgB subfamily. As to quaternary structure, homodimer.

The protein localises to the cytoplasm. The catalysed reaction is N-acetyl-L-glutamate + ATP = N-acetyl-L-glutamyl 5-phosphate + ADP. Its pathway is amino-acid biosynthesis; L-arginine biosynthesis; N(2)-acetyl-L-ornithine from L-glutamate: step 2/4. Functionally, catalyzes the ATP-dependent phosphorylation of N-acetyl-L-glutamate. This is Acetylglutamate kinase from Escherichia coli O157:H7.